The primary structure comprises 389 residues: Ribonucleoside-diphosphate reductase subunit M2 (389 aa).

At S20 the chain carries Phosphoserine. A Phosphothreonine modification is found at T33. Residues 49 to 51 carry the Cy motif; that stretch reads RRI. The Fe cation site is built by D138, E169, and H172. Y176 is a catalytic residue. Fe cation-binding residues include E232, E266, and H269.

This sequence belongs to the ribonucleoside diphosphate reductase small chain family. In terms of assembly, heterodimer of a large and a small subunit. Interacts (via Cy motif and when phosphorylated at Thr-33) with CCNF; the interaction occurs exclusively in G2 and early M. The cofactor is Fe cation. Phosphorylation on Ser-20 relieves the inhibitory effect on Wnt signaling. Phosphorylated on Thr-33 by CDK1 and CDK2; predominantly in G2 and M phase. Post-translationally, ubiquitinated by the SCF(CCNF) E3 ubiquitin-protein ligase complex; leading to its degradation by the proteasome.

Its subcellular location is the cytoplasm. The protein localises to the nucleus. It catalyses the reaction a 2'-deoxyribonucleoside 5'-diphosphate + [thioredoxin]-disulfide + H2O = a ribonucleoside 5'-diphosphate + [thioredoxin]-dithiol. Functionally, provides the precursors necessary for DNA synthesis. Catalyzes the biosynthesis of deoxyribonucleotides from the corresponding ribonucleotides. Inhibits Wnt signaling. The polypeptide is Ribonucleoside-diphosphate reductase subunit M2 (RRM2) (Homo sapiens (Human)).